The primary structure comprises 549 residues: Undecaprenyl phosphate-alpha-4-amino-4-deoxy-L-arabinose arabinosyl transferase (549 aa).

12 helical membrane-spanning segments follow: residues 9-29 (LLLI…GLWI), 80-100 (LFGV…LAYL), 112-132 (SLAC…SGYA), 136-156 (PQFT…LDAG), 166-186 (ILLG…AWLL), 204-224 (LLGY…PWAL), 256-276 (PWWF…GLLP), 288-308 (QAPV…FSLS), 312-332 (LPTY…HALV), 346-366 (NGLL…YLQL), 376-396 (FELF…LAQW), and 402-422 (AWAA…AAMP).

This sequence belongs to the glycosyltransferase 83 family.

The protein resides in the cell inner membrane. The catalysed reaction is 4-amino-4-deoxy-alpha-L-arabinopyranosyl di-trans,octa-cis-undecaprenyl phosphate + lipid IVA = lipid IIA + di-trans,octa-cis-undecaprenyl phosphate.. It participates in lipopolysaccharide metabolism; 4-amino-4-deoxy-beta-L-arabinose-lipid A biosynthesis. Catalyzes the transfer of the L-Ara4N moiety of the glycolipid undecaprenyl phosphate-alpha-L-Ara4N to lipid A. The modified arabinose is attached to lipid A and is required for resistance to polymyxin and cationic antimicrobial peptides. This is Undecaprenyl phosphate-alpha-4-amino-4-deoxy-L-arabinose arabinosyl transferase from Pseudomonas aeruginosa (strain UCBPP-PA14).